The following is a 250-amino-acid chain: Uracil-DNA glycosylase (250 aa).

Residue aspartate 78 is the Proton acceptor of the active site.

The protein belongs to the uracil-DNA glycosylase (UDG) superfamily. UNG family.

The protein resides in the cytoplasm. The enzyme catalyses Hydrolyzes single-stranded DNA or mismatched double-stranded DNA and polynucleotides, releasing free uracil.. Its function is as follows. Excises uracil residues from the DNA which can arise as a result of misincorporation of dUMP residues by DNA polymerase or due to deamination of cytosine. The polypeptide is Uracil-DNA glycosylase (Albidiferax ferrireducens (strain ATCC BAA-621 / DSM 15236 / T118) (Rhodoferax ferrireducens)).